Reading from the N-terminus, the 543-residue chain is CTP synthase (543 aa).

Residues 1–265 form an amidoligase domain region; that stretch reads MTNYIFVTGG…DELVVQRFGL (265 aa). CTP is bound at residue Ser13. Ser13 contributes to the UTP binding site. Residues 14–19 and Asp71 each bind ATP; that span reads SLGKGI. Residues Asp71 and Glu139 each contribute to the Mg(2+) site. Residues 146 to 148, 186 to 191, and Lys222 contribute to the CTP site; these read DIE and KTKPTQ. Residues 186-191 and Lys222 each bind UTP; that span reads KTKPTQ. 238–240 is a binding site for ATP; sequence KDA. One can recognise a Glutamine amidotransferase type-1 domain in the interval 290 to 541; the sequence is TIGMVGKYVE…VKAAGEYYKN (252 aa). Gly351 is a binding site for L-glutamine. The active-site Nucleophile; for glutamine hydrolysis is the Cys378. L-glutamine-binding positions include 379-382, Glu402, and Arg469; that span reads LGMQ. Residues His514 and Glu516 contribute to the active site.

Belongs to the CTP synthase family. Homotetramer.

It catalyses the reaction UTP + L-glutamine + ATP + H2O = CTP + L-glutamate + ADP + phosphate + 2 H(+). The enzyme catalyses L-glutamine + H2O = L-glutamate + NH4(+). The catalysed reaction is UTP + NH4(+) + ATP = CTP + ADP + phosphate + 2 H(+). It participates in pyrimidine metabolism; CTP biosynthesis via de novo pathway; CTP from UDP: step 2/2. Allosterically activated by GTP, when glutamine is the substrate; GTP has no effect on the reaction when ammonia is the substrate. The allosteric effector GTP functions by stabilizing the protein conformation that binds the tetrahedral intermediate(s) formed during glutamine hydrolysis. Inhibited by the product CTP, via allosteric rather than competitive inhibition. Catalyzes the ATP-dependent amination of UTP to CTP with either L-glutamine or ammonia as the source of nitrogen. Regulates intracellular CTP levels through interactions with the four ribonucleotide triphosphates. This is CTP synthase from Pseudoalteromonas atlantica (strain T6c / ATCC BAA-1087).